Reading from the N-terminus, the 434-residue chain is Serine hydroxymethyltransferase (434 aa).

Residues leucine 133 and 137–139 each bind (6S)-5,6,7,8-tetrahydrofolate; that span reads GHL. Lysine 242 carries the post-translational modification N6-(pyridoxal phosphate)lysine.

This sequence belongs to the SHMT family. In terms of assembly, homodimer. The cofactor is pyridoxal 5'-phosphate.

Its subcellular location is the cytoplasm. The enzyme catalyses (6R)-5,10-methylene-5,6,7,8-tetrahydrofolate + glycine + H2O = (6S)-5,6,7,8-tetrahydrofolate + L-serine. It participates in one-carbon metabolism; tetrahydrofolate interconversion. The protein operates within amino-acid biosynthesis; glycine biosynthesis; glycine from L-serine: step 1/1. Its function is as follows. Catalyzes the reversible interconversion of serine and glycine with tetrahydrofolate (THF) serving as the one-carbon carrier. This reaction serves as the major source of one-carbon groups required for the biosynthesis of purines, thymidylate, methionine, and other important biomolecules. Also exhibits THF-independent aldolase activity toward beta-hydroxyamino acids, producing glycine and aldehydes, via a retro-aldol mechanism. The sequence is that of Serine hydroxymethyltransferase from Methylobacterium radiotolerans (strain ATCC 27329 / DSM 1819 / JCM 2831 / NBRC 15690 / NCIMB 10815 / 0-1).